Reading from the N-terminus, the 74-residue chain is Small ribosomal subunit protein bS18 (74 aa).

The protein belongs to the bacterial ribosomal protein bS18 family. Part of the 30S ribosomal subunit. Forms a tight heterodimer with protein bS6.

In terms of biological role, binds as a heterodimer with protein bS6 to the central domain of the 16S rRNA, where it helps stabilize the platform of the 30S subunit. The chain is Small ribosomal subunit protein bS18 from Natranaerobius thermophilus (strain ATCC BAA-1301 / DSM 18059 / JW/NM-WN-LF).